A 114-amino-acid chain; its full sequence is UPF0102 protein HPG27_782 (114 aa).

It belongs to the UPF0102 family.

This is UPF0102 protein HPG27_782 from Helicobacter pylori (strain G27).